The following is a 152-amino-acid chain: MSSKMIVLMSSDGQSFEVEEAVAIQSQTIAHMVEDDCVADGIPLANVESKILVKVIEYCKKHHVDEANPISEEDLNNWDEKFMDLEQSTIFELILAANYLNIKSLLDLTCQTVADMIKGKTPEEIRSTFNIENDFTPEEEEAVRKENQWAFE.

Residues 94–152 (ILAANYLNIKSLLDLTCQTVADMIKGKTPEEIRSTFNIENDFTPEEEEAVRKENQWAFE) are interaction with the F-box domain of F-box proteins.

This sequence belongs to the SKP1 family. Part of a SCF (SKP1-cullin-F-box) protein ligase complex. Interacts with ADO3/FKF1, COI1/FBL2, EBF1/FBL6, PP2A13, PP2B10, UFO, SKIP2, SKIP15, SKIP16, SKIP32, CPR1/CPR30, At1g55000, At1g67340, At1g78100, At3g04660, At3g16740, At3g61590, At4g38940 and At5g49610. As to expression, expressed in young seedlings, cotyledons, roots, leaves, floral stems, inflorescences, pollen, and siliques, with a slightly higher level in inflorescence than in other tissues.

It is found in the nucleus. It participates in protein modification; protein ubiquitination. Its function is as follows. Involved in ubiquitination and subsequent proteasomal degradation of target proteins. Together with CUL1, RBX1 and a F-box protein, it forms a SCF E3 ubiquitin ligase complex. The functional specificity of this complex depends on the type of F-box protein. In the SCF complex, it serves as an adapter that links the F-box protein to CUL1. Plays a role during early flowers reproductive development. The chain is SKP1-like protein 11 (ASK11) from Arabidopsis thaliana (Mouse-ear cress).